The primary structure comprises 297 residues: Large ribosomal subunit protein uL18 (297 aa).

Lys164 participates in a covalent cross-link: Glycyl lysine isopeptide (Lys-Gly) (interchain with G-Cter in ubiquitin). A phosphoserine mark is found at Ser167, Ser176, and Ser235.

The protein belongs to the universal ribosomal protein uL18 family. Component of the large ribosomal subunit (LSU). Mature yeast ribosomes consist of a small (40S) and a large (60S) subunit. The 40S small subunit contains 1 molecule of ribosomal RNA (18S rRNA) and 33 different proteins (encoded by 57 genes). The large 60S subunit contains 3 rRNA molecules (25S, 5.8S and 5S rRNA) and 46 different proteins (encoded by 81 genes). Component of a hexameric 5S RNP precursor complex, composed of 5S RNA, RRS1, RPF2, RPL5, RPL11A/RPL11B and SYO1; this complex acts as a precursor for ribosome assembly. RPL5/uL18 forms a heterotrimeric complex with SYO1 and RPL11A/RPL11B/uL5. Interaction of this complex with KAP104 allows the nuclear import of the heterotrimer.

The protein resides in the cytoplasm. It localises to the nucleus. Functionally, component of the ribosome, a large ribonucleoprotein complex responsible for the synthesis of proteins in the cell. The small ribosomal subunit (SSU) binds messenger RNAs (mRNAs) and translates the encoded message by selecting cognate aminoacyl-transfer RNA (tRNA) molecules. The large subunit (LSU) contains the ribosomal catalytic site termed the peptidyl transferase center (PTC), which catalyzes the formation of peptide bonds, thereby polymerizing the amino acids delivered by tRNAs into a polypeptide chain. The nascent polypeptides leave the ribosome through a tunnel in the LSU and interact with protein factors that function in enzymatic processing, targeting, and the membrane insertion of nascent chains at the exit of the ribosomal tunnel. This Saccharomyces cerevisiae (strain ATCC 204508 / S288c) (Baker's yeast) protein is Large ribosomal subunit protein uL18.